Here is a 331-residue protein sequence, read N- to C-terminus: HPr kinase/phosphorylase (331 aa).

Residues H153 and K174 contribute to the active site. An ATP-binding site is contributed by G168–S175. S175 contacts Mg(2+). D192 serves as the catalytic Proton acceptor; for phosphorylation activity. Proton donor; for dephosphorylation activity. The segment at M217–D226 is important for the catalytic mechanism of both phosphorylation and dephosphorylation. Residue E218 coordinates Mg(2+). The active site involves R259. Residues P280–K285 are important for the catalytic mechanism of dephosphorylation.

This sequence belongs to the HPrK/P family. In terms of assembly, homohexamer. Mg(2+) serves as cofactor.

It catalyses the reaction [HPr protein]-L-serine + ATP = [HPr protein]-O-phospho-L-serine + ADP + H(+). The catalysed reaction is [HPr protein]-O-phospho-L-serine + phosphate + H(+) = [HPr protein]-L-serine + diphosphate. In terms of biological role, catalyzes the ATP- as well as the pyrophosphate-dependent phosphorylation of a specific serine residue in HPr, a phosphocarrier protein of the phosphoenolpyruvate-dependent sugar phosphotransferase system (PTS). HprK/P also catalyzes the pyrophosphate-producing, inorganic phosphate-dependent dephosphorylation (phosphorolysis) of seryl-phosphorylated HPr (P-Ser-HPr). The polypeptide is HPr kinase/phosphorylase (Pelodictyon phaeoclathratiforme (strain DSM 5477 / BU-1)).